Reading from the N-terminus, the 615-residue chain is Medium-chain acyl-CoA ligase ACSF2, mitochondrial (615 aa).

Residues 1–41 constitute a mitochondrion transit peptide; sequence MAVYVGMLRLGRLCAGSSGVLGARAALSRSWQEARLQGVRF. At K179 the chain carries N6-acetyllysine. K182 bears the N6-acetyllysine; alternate mark. K182 is subject to N6-succinyllysine; alternate. ATP is bound at residue 263–271; it reads TSGTTGSPK. 2 positions are modified to N6-acetyllysine: K340 and K398. K478 carries the post-translational modification N6-succinyllysine. The ATP site is built by D493 and R508. Position 510 is an N6-acetyllysine (K510). An N6-acetyllysine; alternate mark is found at K544 and K570. N6-succinyllysine; alternate occurs at positions 544 and 570. K599 contacts ATP. An N6-succinyllysine modification is found at K599.

The protein belongs to the ATP-dependent AMP-binding enzyme family.

It localises to the mitochondrion. It catalyses the reaction a medium-chain fatty acid + ATP + CoA = a medium-chain fatty acyl-CoA + AMP + diphosphate. The enzyme catalyses octanoate + ATP + CoA = octanoyl-CoA + AMP + diphosphate. In terms of biological role, acyl-CoA synthases catalyze the initial reaction in fatty acid metabolism, by forming a thioester with CoA. Has some preference toward medium-chain substrates. Plays a role in adipocyte differentiation. The sequence is that of Medium-chain acyl-CoA ligase ACSF2, mitochondrial from Homo sapiens (Human).